A 110-amino-acid chain; its full sequence is UPF0122 protein SGO_1122 (110 aa).

This sequence belongs to the UPF0122 family.

In terms of biological role, might take part in the signal recognition particle (SRP) pathway. This is inferred from the conservation of its genetic proximity to ftsY/ffh. May be a regulatory protein. This chain is UPF0122 protein SGO_1122, found in Streptococcus gordonii (strain Challis / ATCC 35105 / BCRC 15272 / CH1 / DL1 / V288).